The chain runs to 97 residues: Large ribosomal subunit protein uL23 (97 aa).

This sequence belongs to the universal ribosomal protein uL23 family. Part of the 50S ribosomal subunit. Contacts protein L29, and trigger factor when it is bound to the ribosome.

Functionally, one of the early assembly proteins it binds 23S rRNA. One of the proteins that surrounds the polypeptide exit tunnel on the outside of the ribosome. Forms the main docking site for trigger factor binding to the ribosome. The chain is Large ribosomal subunit protein uL23 from Thermoanaerobacter pseudethanolicus (strain ATCC 33223 / 39E) (Clostridium thermohydrosulfuricum).